A 99-amino-acid polypeptide reads, in one-letter code: Integration host factor subunit beta (99 aa).

It belongs to the bacterial histone-like protein family. As to quaternary structure, heterodimer of an alpha and a beta chain.

Functionally, this protein is one of the two subunits of integration host factor, a specific DNA-binding protein that functions in genetic recombination as well as in transcriptional and translational control. This Rhizobium etli (strain CIAT 652) protein is Integration host factor subunit beta.